A 598-amino-acid chain; its full sequence is Elongation factor 4 (598 aa).

In terms of domain architecture, tr-type G spans 4–186 (KHIRNFSIIA…VIVRQIPPPE (183 aa)). GTP is bound by residues 16–21 (DHGKST) and 133–136 (NKID).

This sequence belongs to the TRAFAC class translation factor GTPase superfamily. Classic translation factor GTPase family. LepA subfamily.

The protein localises to the cell inner membrane. The catalysed reaction is GTP + H2O = GDP + phosphate + H(+). Its function is as follows. Required for accurate and efficient protein synthesis under certain stress conditions. May act as a fidelity factor of the translation reaction, by catalyzing a one-codon backward translocation of tRNAs on improperly translocated ribosomes. Back-translocation proceeds from a post-translocation (POST) complex to a pre-translocation (PRE) complex, thus giving elongation factor G a second chance to translocate the tRNAs correctly. Binds to ribosomes in a GTP-dependent manner. The chain is Elongation factor 4 from Pseudoalteromonas atlantica (strain T6c / ATCC BAA-1087).